Reading from the N-terminus, the 431-residue chain is Probable glucarate dehydratase (431 aa).

4 residues coordinate substrate: His29, Thr108, Tyr153, and Lys198. Lys200 functions as the Proton acceptor in the catalytic mechanism. Asp228 and Asn276 together coordinate Mg(2+). Substrate-binding positions include Asp228–Asn230, Asn276, His327–Asn329, His356, and Arg410. Catalysis depends on His327, which acts as the Proton acceptor.

The protein belongs to the mandelate racemase/muconate lactonizing enzyme family. GlucD subfamily. Mg(2+) is required as a cofactor.

It catalyses the reaction D-glucarate = 5-dehydro-4-deoxy-D-glucarate + H2O. It functions in the pathway carbohydrate acid metabolism; D-glucarate degradation; 2,5-dioxopentanoate from D-glucarate: step 1/2. In terms of biological role, catalyzes the dehydration of glucarate to 5-keto-4-deoxy-D-glucarate (5-kdGluc). The protein is Probable glucarate dehydratase (gudD) of Streptomyces coelicolor (strain ATCC BAA-471 / A3(2) / M145).